The primary structure comprises 1285 residues: Period circadian protein homolog 1 (1285 aa).

Residues 1-134 form a disordered region; the sequence is MSGPLEGADG…SSEQSARART (134 aa). The interval 1-151 is interaction with BTRC; it reads MSGPLEGADG…LRELKLRLPP (151 aa). Low complexity-rich tracts occupy residues 48–57 and 64–115; these read NSNGSSGNES and GASQ…ASSE. Polar residues predominate over residues 116-132; it reads QDNPSTSGCSSEQSARA. The residue at position 121 (threonine 121) is a Phosphothreonine; by CSNK1E. 2 positions are modified to phosphoserine; by CSNK1E: serine 122 and serine 126. Residues 138-147 carry the Nuclear export signal 1 motif; sequence LMTALRELKL. PAS domains lie at 208–275 and 348–414; these read ITSE…PFRL and YEAP…KILQ. In terms of domain architecture, PAC spans 422–465; the sequence is HSPIRFCARNGEYVTMDTSWAGFVHPWSRKVAFVLGRHKVRTAP. The Nuclear export signal 2 motif lies at 489–498; the sequence is LSEQIHRLLL. Disordered regions lie at residues 503 to 544 and 643 to 694; these read SSSP…PAPV and TKRK…KEPV. 2 stretches are compositionally biased toward low complexity: residues 523-533 and 648-658; these read SPGSSSDSNGG and ASSSSCTASSA. A required for phosphorylation by CSNK1E region spans residues 592–811; that stretch reads ELEVVPMPNQ…GLDSSSATPS (220 aa). 4 positions are modified to phosphoserine: serine 657, serine 659, serine 700, and serine 811. Disordered stretches follow at residues 802–867 and 931–1030; these read GLDS…PPST and LSQA…DALS. Positions 820–836 match the Nuclear localization signal motif; sequence VPPGRRHHCRSKAKRSR. Over residues 823-840 the composition is skewed to basic residues; it reads GRRHHCRSKAKRSRHHHT. The span at 853 to 867 shows a compositional bias: pro residues; sequence SPVPPSGPWPPPPST. Residues 943–954 are compositionally biased toward low complexity; the sequence is ASHSPSPSLTPL. The span at 967–979 shows a compositional bias: polar residues; that stretch reads FNSRCSSPLQLNL. Phosphoserine occurs at positions 972 and 973. A Nuclear export signal 3 motif is present at residues 975–982; that stretch reads LQLNLLQL. The short motif at 1036-1040 is the LXXLL element; it reads LELLL. Positions 1045–1055 are enriched in low complexity; the sequence is RSGTGSAASGS. 2 disordered regions span residues 1045–1091 and 1202–1285; these read RSGT…SKYF and IQDP…NSTS. Gly residues predominate over residues 1056 to 1070; the sequence is LGSGLGSGSGSGSHE. Positions 1071–1088 are enriched in low complexity; sequence GGSTSASITRSSQSSHTS. Positions 1142-1285 are CRY binding domain; it reads SRDRASVLKQ…ALPAEENSTS (144 aa). Residues 1229–1241 are compositionally biased toward gly residues; it reads GEGGGGGGGGGEG. Positions 1269 to 1285 are enriched in polar residues; it reads GGSSSSPALPAEENSTS.

Homodimer. Component of the circadian core oscillator, which includes the CRY proteins, CLOCK or NPAS2, BMAL1 or BMAL2, CSNK1D and/or CSNK1E, TIMELESS, and the PER proteins. Interacts directly with TIMELESS, PER2, PER3, CRY1 and CRY2. Interacts with BMAL1 and CLOCK. Interacts with GPRASP1. Interacts (phosphorylated) with BTRC and FBXW11; the interactions trigger proteasomal degradation. Interacts with NONO, WDR5 and SFPQ. Interacts with USP2. Interacts with HNF4A. In terms of processing, phosphorylated on serine residues by CSNK1D, CSNK1E and probably also by CSNK1G2. Phosphorylation by CSNK1D or CSNK1E promotes nuclear location of PER proteins as well as ubiquitination and subsequent degradation. May be dephosphorylated by PP1. Ubiquitinated; requires phosphorylation by CSNK1E and interaction with BTRC and FBXW11. Deubiquitinated by USP2. In terms of tissue distribution, expressed in the brain, mainly in the suprachiasmatic nucleus (SCN). Expression also found in the harderian gland, lung, eye, intestine, liver and skeletal muscle.

It localises to the nucleus. The protein localises to the cytoplasm. Transcriptional repressor which forms a core component of the circadian clock. The circadian clock, an internal time-keeping system, regulates various physiological processes through the generation of approximately 24 hour circadian rhythms in gene expression, which are translated into rhythms in metabolism and behavior. It is derived from the Latin roots 'circa' (about) and 'diem' (day) and acts as an important regulator of a wide array of physiological functions including metabolism, sleep, body temperature, blood pressure, endocrine, immune, cardiovascular, and renal function. Consists of two major components: the central clock, residing in the suprachiasmatic nucleus (SCN) of the brain, and the peripheral clocks that are present in nearly every tissue and organ system. Both the central and peripheral clocks can be reset by environmental cues, also known as Zeitgebers (German for 'timegivers'). The predominant Zeitgeber for the central clock is light, which is sensed by retina and signals directly to the SCN. The central clock entrains the peripheral clocks through neuronal and hormonal signals, body temperature and feeding-related cues, aligning all clocks with the external light/dark cycle. Circadian rhythms allow an organism to achieve temporal homeostasis with its environment at the molecular level by regulating gene expression to create a peak of protein expression once every 24 hours to control when a particular physiological process is most active with respect to the solar day. Transcription and translation of core clock components (CLOCK, NPAS2, BMAL1, BMAL2, PER1, PER2, PER3, CRY1 and CRY2) plays a critical role in rhythm generation, whereas delays imposed by post-translational modifications (PTMs) are important for determining the period (tau) of the rhythms (tau refers to the period of a rhythm and is the length, in time, of one complete cycle). A diurnal rhythm is synchronized with the day/night cycle, while the ultradian and infradian rhythms have a period shorter and longer than 24 hours, respectively. Disruptions in the circadian rhythms contribute to the pathology of cardiovascular diseases, cancer, metabolic syndromes and aging. A transcription/translation feedback loop (TTFL) forms the core of the molecular circadian clock mechanism. Transcription factors, CLOCK or NPAS2 and BMAL1 or BMAL2, form the positive limb of the feedback loop, act in the form of a heterodimer and activate the transcription of core clock genes and clock-controlled genes (involved in key metabolic processes), harboring E-box elements (5'-CACGTG-3') within their promoters. The core clock genes: PER1/2/3 and CRY1/2 which are transcriptional repressors form the negative limb of the feedback loop and interact with the CLOCK|NPAS2-BMAL1|BMAL2 heterodimer inhibiting its activity and thereby negatively regulating their own expression. This heterodimer also activates nuclear receptors NR1D1/2 and RORA/B/G, which form a second feedback loop and which activate and repress BMAL1 transcription, respectively. Regulates circadian target genes expression at post-transcriptional levels, but may not be required for the repression at transcriptional level. Controls PER2 protein decay. Represses CRY2 preventing its repression on CLOCK/BMAL1 target genes such as FXYD5 and SCNN1A in kidney and PPARA in liver. Besides its involvement in the maintenance of the circadian clock, has an important function in the regulation of several processes. Participates in the repression of glucocorticoid receptor NR3C1/GR-induced transcriptional activity by reducing the association of NR3C1/GR to glucocorticoid response elements (GREs) by BMAL1:CLOCK. Plays a role in the modulation of the neuroinflammatory state via the regulation of inflammatory mediators release, such as CCL2 and IL6. In spinal astrocytes, negatively regulates the MAPK14/p38 and MAPK8/JNK MAPK cascades as well as the subsequent activation of NFkappaB. Coordinately regulates the expression of multiple genes that are involved in the regulation of renal sodium reabsorption. Can act as gene expression activator in a gene and tissue specific manner, in kidney enhances WNK1 and SLC12A3 expression in collaboration with CLOCK. Modulates hair follicle cycling. Represses the CLOCK-BMAL1 induced transcription of BHLHE40/DEC1. In Spalax judaei (Judean Mountains blind mole rat), this protein is Period circadian protein homolog 1 (PER1).